Here is a 224-residue protein sequence, read N- to C-terminus: UPF0758 protein AHA_0160 (224 aa).

One can recognise an MPN domain in the interval 102-224 (PLTSPQLTRD…TVSFAERGWL (123 aa)). Zn(2+)-binding residues include His-173, His-175, and Asp-186. The JAMM motif motif lies at 173–186 (HNHPSGVAEPSRAD).

This sequence belongs to the UPF0758 family.

The sequence is that of UPF0758 protein AHA_0160 from Aeromonas hydrophila subsp. hydrophila (strain ATCC 7966 / DSM 30187 / BCRC 13018 / CCUG 14551 / JCM 1027 / KCTC 2358 / NCIMB 9240 / NCTC 8049).